The sequence spans 426 residues: Serine--tRNA ligase (426 aa).

A compositionally biased stretch (basic and acidic residues) spans 1–15; the sequence is MIDVKDLSENPDKFR. The interval 1–22 is disordered; sequence MIDVKDLSENPDKFRASQRARG. Position 228 to 230 (228 to 230) interacts with L-serine; it reads TSE. ATP is bound by residues 259-261 and Val275; that span reads RRE. L-serine is bound at residue Glu282. 346 to 349 provides a ligand contact to ATP; that stretch reads ELTS. Thr386 is a binding site for L-serine.

This sequence belongs to the class-II aminoacyl-tRNA synthetase family. Type-1 seryl-tRNA synthetase subfamily. As to quaternary structure, homodimer. The tRNA molecule binds across the dimer.

The protein resides in the cytoplasm. The enzyme catalyses tRNA(Ser) + L-serine + ATP = L-seryl-tRNA(Ser) + AMP + diphosphate + H(+). It carries out the reaction tRNA(Sec) + L-serine + ATP = L-seryl-tRNA(Sec) + AMP + diphosphate + H(+). It functions in the pathway aminoacyl-tRNA biosynthesis; selenocysteinyl-tRNA(Sec) biosynthesis; L-seryl-tRNA(Sec) from L-serine and tRNA(Sec): step 1/1. In terms of biological role, catalyzes the attachment of serine to tRNA(Ser). Is also able to aminoacylate tRNA(Sec) with serine, to form the misacylated tRNA L-seryl-tRNA(Sec), which will be further converted into selenocysteinyl-tRNA(Sec). The polypeptide is Serine--tRNA ligase (Pseudarthrobacter chlorophenolicus (strain ATCC 700700 / DSM 12829 / CIP 107037 / JCM 12360 / KCTC 9906 / NCIMB 13794 / A6) (Arthrobacter chlorophenolicus)).